Consider the following 181-residue polypeptide: MAENQNNLIWIDLEMTGLDPERDRIIEIATLVTDANLNILAEGPVLAVHQSAEQLGLMDEWNVRTHTGSGLVERVKTSPFNDRDAELQTIEFLKQWVPAGVSPICGNSVGQDRRFLFRYMPELEAYFHYRYVDVSTLKELARRWKPEILAGFKKQNTHQALDDIRESVAELAYYREHFIQS.

The Exonuclease domain maps to 8–171 (LIWIDLEMTG…DDIRESVAEL (164 aa)). Residue Y129 is part of the active site.

It belongs to the oligoribonuclease family.

The protein resides in the cytoplasm. 3'-to-5' exoribonuclease specific for small oligoribonucleotides. The protein is Oligoribonuclease of Yersinia pseudotuberculosis serotype O:1b (strain IP 31758).